The primary structure comprises 242 residues: Uridylate kinase (242 aa).

16–19 contacts ATP; that stretch reads KVSG. Position 58 (glycine 58) interacts with UMP. Residues glycine 59 and arginine 63 each coordinate ATP. Residues aspartate 78 and 139 to 146 contribute to the UMP site; that span reads TGNPFCTT. Residues threonine 166, glutamine 167, tyrosine 172, and aspartate 175 each coordinate ATP.

Belongs to the UMP kinase family. In terms of assembly, homohexamer.

Its subcellular location is the cytoplasm. The catalysed reaction is UMP + ATP = UDP + ADP. It functions in the pathway pyrimidine metabolism; CTP biosynthesis via de novo pathway; UDP from UMP (UMPK route): step 1/1. With respect to regulation, inhibited by UTP. Catalyzes the reversible phosphorylation of UMP to UDP. The sequence is that of Uridylate kinase from Rickettsia massiliae (strain Mtu5).